A 678-amino-acid chain; its full sequence is Probable metal-nicotianamine transporter YSL6 (678 aa).

The next 14 membrane-spanning stretches (helical) occupy residues Val-41 to His-61, Leu-65 to Val-85, Cys-113 to Met-133, Leu-158 to Ala-178, Ile-226 to Phe-246, Ile-279 to Ile-299, Val-324 to Tyr-344, Leu-394 to Phe-414, Trp-419 to Gly-439, Gly-467 to Ala-487, Ile-512 to Phe-532, Ser-561 to Ile-581, Phe-606 to Trp-626, and Ile-641 to Ile-661.

The protein belongs to the YSL (TC 2.A.67.2) family. As to expression, expressed in roots and leaves.

The protein resides in the membrane. In terms of biological role, may be involved in the transport of nicotianamine-chelated metals. This chain is Probable metal-nicotianamine transporter YSL6 (YSL6), found in Oryza sativa subsp. japonica (Rice).